The chain runs to 289 residues: Serine/threonine-protein phosphatase Pgam5, mitochondrial (289 aa).

Residues 7 to 23 (LVCGAGAGLAAFYLSRL) form a helical membrane-spanning segment.

Belongs to the phosphoglycerate mutase family. BPG-dependent PGAM subfamily. Interacts with Pk92B/ASK1.

It is found in the mitochondrion outer membrane. It catalyses the reaction O-phospho-L-seryl-[protein] + H2O = L-seryl-[protein] + phosphate. The enzyme catalyses O-phospho-L-threonyl-[protein] + H2O = L-threonyl-[protein] + phosphate. Its function is as follows. Displays phosphatase activity for serine/threonine residues, and dephosphorylates and activates Pk92B kinase. Has apparently no phosphoglycerate mutase activity. The protein is Serine/threonine-protein phosphatase Pgam5, mitochondrial of Drosophila ananassae (Fruit fly).